Here is a 520-residue protein sequence, read N- to C-terminus: GMP synthase [glutamine-hydrolyzing] (520 aa).

One can recognise a Glutamine amidotransferase type-1 domain in the interval 4-202; it reads KILILDFGSQ…VHDICGCGSD (199 aa). Residue C81 is the Nucleophile of the active site. Residues H176 and E178 contribute to the active site. Residues 203-395 form the GMPS ATP-PPase domain; it reads WNMPDYVEEA…LGLPHDMVYR (193 aa). 230-236 serves as a coordination point for ATP; sequence SGGVDSS.

In terms of assembly, homodimer.

The enzyme catalyses XMP + L-glutamine + ATP + H2O = GMP + L-glutamate + AMP + diphosphate + 2 H(+). The protein operates within purine metabolism; GMP biosynthesis; GMP from XMP (L-Gln route): step 1/1. Functionally, catalyzes the synthesis of GMP from XMP. This chain is GMP synthase [glutamine-hydrolyzing], found in Thiobacillus denitrificans (strain ATCC 25259 / T1).